The primary structure comprises 556 residues: 2-succinyl-5-enolpyruvyl-6-hydroxy-3-cyclohexene-1-carboxylate synthase (556 aa).

It belongs to the TPP enzyme family. MenD subfamily. Homodimer. Requires Mg(2+) as cofactor. It depends on Mn(2+) as a cofactor. Thiamine diphosphate is required as a cofactor.

The enzyme catalyses isochorismate + 2-oxoglutarate + H(+) = 5-enolpyruvoyl-6-hydroxy-2-succinyl-cyclohex-3-ene-1-carboxylate + CO2. It functions in the pathway quinol/quinone metabolism; 1,4-dihydroxy-2-naphthoate biosynthesis; 1,4-dihydroxy-2-naphthoate from chorismate: step 2/7. The protein operates within quinol/quinone metabolism; menaquinone biosynthesis. Functionally, catalyzes the thiamine diphosphate-dependent decarboxylation of 2-oxoglutarate and the subsequent addition of the resulting succinic semialdehyde-thiamine pyrophosphate anion to isochorismate to yield 2-succinyl-5-enolpyruvyl-6-hydroxy-3-cyclohexene-1-carboxylate (SEPHCHC). The polypeptide is 2-succinyl-5-enolpyruvyl-6-hydroxy-3-cyclohexene-1-carboxylate synthase (Staphylococcus epidermidis (strain ATCC 12228 / FDA PCI 1200)).